A 137-amino-acid polypeptide reads, in one-letter code: Actin-depolymerizing factor 12 (137 aa).

Phosphoserine is present on S6. Residues 7–137 (GMAVEDECKL…SLDIIKSRAL (131 aa)) form the ADF-H domain.

The protein belongs to the actin-binding proteins ADF family. In terms of tissue distribution, specifically expressed in pollen.

It localises to the cytoplasm. It is found in the cytoskeleton. Functionally, actin-depolymerizing protein. Severs actin filaments (F-actin) and binds to actin monomers. The sequence is that of Actin-depolymerizing factor 12 from Arabidopsis thaliana (Mouse-ear cress).